A 186-amino-acid chain; its full sequence is Small ribosomal subunit protein uS5 (186 aa).

The S5 DRBM domain maps to 18–81; sequence FVDKLVHINR…EAAKRAMIRV (64 aa).

It belongs to the universal ribosomal protein uS5 family. In terms of assembly, part of the 30S ribosomal subunit. Contacts proteins S4 and S8.

Functionally, with S4 and S12 plays an important role in translational accuracy. Its function is as follows. Located at the back of the 30S subunit body where it stabilizes the conformation of the head with respect to the body. The polypeptide is Small ribosomal subunit protein uS5 (Parvibaculum lavamentivorans (strain DS-1 / DSM 13023 / NCIMB 13966)).